The primary structure comprises 880 residues: MGIEKRKKMVWFWPEKHEGGVIKEAEDVAAEHISREGTMSHYSFSKGLLPPLGVGATARSSRHIKLRCFIVSPFDPRYRAWDWFLVILVLYTAWASPFEFGFLQTPRAPLSILDNVVNGFFAVDIVLTFFVAFLDKATYLLVDDPKRIAWRYTSTWLIFDVVSTVPYELFGSLLHNTIQGYGIFSMLRLWRLHRVSKCFARLEKDRKYNYFWIRCTKLLLVSLFVVHCGACFCYSIAAHYPDPSMTFMALAEANWKQKSLLIRYVTAMYWSITTFSTTGYGDIHGNNAEERAFILFYMIFNLGLLAYIIGNMTNLVVHVTSRTRNFRDTIQAASAFAQRNNLPLGLQEQMVAHLSLRYRTDSEGLQQQEIIDSLPKAIRSSISHYLFYEVVDKTYLFHGISNDLLFQLVSEMKAEYFPPKEDVILRNEAPSDFYIMVTGAVDIIARVNGVDQVVGEAQTGHVFGEVGVLCYRPQLFTVRTKRLSQLLRLNRTAFLNLVQANVGDGAIIMNNLLQHLKDSTDPVMKGILAETELMLAQGKMDLPLSLCFAAARGDDLLLHQLLKRGSNPNETDKNGRTALHIAASKGSQYCVVLLLEHGADPNIRDSEGSVPLWEAIIGRHEENAKLLSENGATLSFDTVGYFSCLAVGQNNLNALKDIVKYGGDISLSDVNGTTALHRAVSEGNLEIVQFLLEKGADMDKPDVYGWTARALAEHQGHEDIKALFYNQRPVERKTILVSGTPEIKPLMKHSSEPVMTHHHSREAMPPLARAVSQRRKLSNFKNSLFGIMSAAKTGDEGGASTRTGISEGVGGVYPARVTISGEASSSGKVVKLPDSLEELIEIGEKKLGFVATKILSREGAEIDDIRIIRDGDFLLLLKVS.

Over 1–82 (MGIEKRKKMV…PFDPRYRAWD (82 aa)) the chain is Cytoplasmic. The helical transmembrane segment at 83-103 (WFLVILVLYTAWASPFEFGFL) threads the bilayer. Over 104–111 (QTPRAPLS) the chain is Extracellular. The chain crosses the membrane as a helical span at residues 112–132 (ILDNVVNGFFAVDIVLTFFVA). Residues 133 to 153 (FLDKATYLLVDDPKRIAWRYT) are Cytoplasmic-facing. The helical transmembrane segment at 154–174 (STWLIFDVVSTVPYELFGSLL) threads the bilayer. Topologically, residues 175-182 (HNTIQGYG) are extracellular. A helical; Voltage-sensor transmembrane segment spans residues 183-203 (IFSMLRLWRLHRVSKCFARLE). Over 204–217 (KDRKYNYFWIRCTK) the chain is Cytoplasmic. A helical membrane pass occupies residues 218-238 (LLLVSLFVVHCGACFCYSIAA). The Extracellular portion of the chain corresponds to 239–265 (HYPDPSMTFMALAEANWKQKSLLIRYV). The pore-forming intramembrane region spans 266–285 (TAMYWSITTFSTTGYGDIHG). Residues 286–291 (NNAEER) are Extracellular-facing. A helical transmembrane segment spans residues 292–312 (AFILFYMIFNLGLLAYIIGNM). Topologically, residues 313–880 (TNLVVHVTSR…GDFLLLLKVS (568 aa)) are cytoplasmic. 396 to 517 (LFHGISNDLL…IMNNLLQHLK (122 aa)) contributes to the a nucleoside 3',5'-cyclic phosphate binding site. ANK repeat units lie at residues 541–570 (DLPL…NPNE), 574–603 (NGRT…DPNI), 607–636 (EGSV…TLSF), 637–667 (DTVG…DISL), and 671–700 (NGTT…DMDK). In terms of domain architecture, KHA spans 809-880 (VGGVYPARVT…GDFLLLLKVS (72 aa)).

It belongs to the potassium channel family. Plant (TC 1.A.1.4) subfamily. As to quaternary structure, the potassium channel is probably composed of a homo- or heterotetrameric complex of pore-forming subunits. In terms of tissue distribution, predominantly expressed in flowers.

The protein localises to the membrane. Functionally, probable potassium channel. May interact with the cytoskeleton or with regulatory proteins. This chain is Probable potassium channel AKT5 (AKT5), found in Arabidopsis thaliana (Mouse-ear cress).